The primary structure comprises 116 residues: CDKN2AIP N-terminal-like protein (116 aa).

M1 is modified (N-acetylmethionine). In terms of domain architecture, XRN2-binding (XTBD) spans 24–116 (AEQFRSYSES…RSELMKKHQS (93 aa)).

Belongs to the CARF family. Interacts with XRN2; the interaction is direct.

This is CDKN2AIP N-terminal-like protein (CDKN2AIPNL) from Bos taurus (Bovine).